We begin with the raw amino-acid sequence, 431 residues long: Bifunctional protein GlmU (431 aa).

The pyrophosphorylase stretch occupies residues 1–223; that stretch reads MNLSIVILAA…EENFKGVNSK (223 aa). UDP-N-acetyl-alpha-D-glucosamine contacts are provided by residues 8–11, lysine 22, glutamine 74, and 81–82; these read LAAG and GT. Aspartate 102 serves as a coordination point for Mg(2+). UDP-N-acetyl-alpha-D-glucosamine contacts are provided by glycine 135, glutamate 149, asparagine 164, and asparagine 221. Asparagine 221 provides a ligand contact to Mg(2+). The linker stretch occupies residues 224-244; the sequence is ADLAEAEAIMTGRIRRRWMRE. Residues 245 to 431 form an N-acetyltransferase region; it reads GVRMRLPETI…FFARYFSSSK (187 aa). Arginine 308 and lysine 325 together coordinate UDP-N-acetyl-alpha-D-glucosamine. Histidine 336 (proton acceptor) is an active-site residue. Tyrosine 339 and asparagine 350 together coordinate UDP-N-acetyl-alpha-D-glucosamine. Residues alanine 353, 359–360, serine 378, alanine 396, and arginine 413 each bind acetyl-CoA; that span reads NY.

The protein in the N-terminal section; belongs to the N-acetylglucosamine-1-phosphate uridyltransferase family. It in the C-terminal section; belongs to the transferase hexapeptide repeat family. As to quaternary structure, homotrimer. It depends on Mg(2+) as a cofactor.

The protein resides in the cytoplasm. It catalyses the reaction alpha-D-glucosamine 1-phosphate + acetyl-CoA = N-acetyl-alpha-D-glucosamine 1-phosphate + CoA + H(+). It carries out the reaction N-acetyl-alpha-D-glucosamine 1-phosphate + UTP + H(+) = UDP-N-acetyl-alpha-D-glucosamine + diphosphate. The protein operates within nucleotide-sugar biosynthesis; UDP-N-acetyl-alpha-D-glucosamine biosynthesis; N-acetyl-alpha-D-glucosamine 1-phosphate from alpha-D-glucosamine 6-phosphate (route II): step 2/2. Its pathway is nucleotide-sugar biosynthesis; UDP-N-acetyl-alpha-D-glucosamine biosynthesis; UDP-N-acetyl-alpha-D-glucosamine from N-acetyl-alpha-D-glucosamine 1-phosphate: step 1/1. It participates in bacterial outer membrane biogenesis; LPS lipid A biosynthesis. Functionally, catalyzes the last two sequential reactions in the de novo biosynthetic pathway for UDP-N-acetylglucosamine (UDP-GlcNAc). The C-terminal domain catalyzes the transfer of acetyl group from acetyl coenzyme A to glucosamine-1-phosphate (GlcN-1-P) to produce N-acetylglucosamine-1-phosphate (GlcNAc-1-P), which is converted into UDP-GlcNAc by the transfer of uridine 5-monophosphate (from uridine 5-triphosphate), a reaction catalyzed by the N-terminal domain. This is Bifunctional protein GlmU from Wolinella succinogenes (strain ATCC 29543 / DSM 1740 / CCUG 13145 / JCM 31913 / LMG 7466 / NCTC 11488 / FDC 602W) (Vibrio succinogenes).